A 131-amino-acid chain; its full sequence is Sec-independent protein translocase protein TatB (131 aa).

A helical transmembrane segment spans residues 2–22; the sequence is FDGIGFMELLLIGIVGLVVLG. The segment covering 86–95 has biased composition (polar residues); that stretch reads LKEAAQSVNR. Positions 86–131 are disordered; that stretch reads LKEAAQSVNRPYQVEDVPAAKDVPAKEMPTSETSTATNANSDKPNG. Positions 115–131 are enriched in low complexity; sequence TSETSTATNANSDKPNG.

Belongs to the TatB family. The Tat system comprises two distinct complexes: a TatABC complex, containing multiple copies of TatA, TatB and TatC subunits, and a separate TatA complex, containing only TatA subunits. Substrates initially bind to the TatABC complex, which probably triggers association of the separate TatA complex to form the active translocon.

The protein localises to the cell inner membrane. Functionally, part of the twin-arginine translocation (Tat) system that transports large folded proteins containing a characteristic twin-arginine motif in their signal peptide across membranes. Together with TatC, TatB is part of a receptor directly interacting with Tat signal peptides. TatB may form an oligomeric binding site that transiently accommodates folded Tat precursor proteins before their translocation. In Shewanella halifaxensis (strain HAW-EB4), this protein is Sec-independent protein translocase protein TatB.